A 313-amino-acid chain; its full sequence is Ribosomal RNA small subunit methyltransferase H (313 aa).

S-adenosyl-L-methionine contacts are provided by residues 31–33, aspartate 51, phenylalanine 77, aspartate 95, and glutamine 102; that span reads GGH.

The protein belongs to the methyltransferase superfamily. RsmH family.

It is found in the cytoplasm. The enzyme catalyses cytidine(1402) in 16S rRNA + S-adenosyl-L-methionine = N(4)-methylcytidine(1402) in 16S rRNA + S-adenosyl-L-homocysteine + H(+). In terms of biological role, specifically methylates the N4 position of cytidine in position 1402 (C1402) of 16S rRNA. In Xylella fastidiosa (strain M23), this protein is Ribosomal RNA small subunit methyltransferase H.